Here is a 544-residue protein sequence, read N- to C-terminus: Membrane protein insertase YidC (544 aa).

The next 5 membrane-spanning stretches (helical) occupy residues 13-33 (LSLF…SNIL), 343-363 (WGLS…PLTF), 409-429 (LGGC…YSLV), 461-481 (LYFV…FTQL), and 506-526 (MPIM…IYWI).

It belongs to the OXA1/ALB3/YidC family. Type 1 subfamily. As to quaternary structure, interacts with the Sec translocase complex via SecD. Specifically interacts with transmembrane segments of nascent integral membrane proteins during membrane integration.

It is found in the cell inner membrane. In terms of biological role, required for the insertion and/or proper folding and/or complex formation of integral membrane proteins into the membrane. Involved in integration of membrane proteins that insert both dependently and independently of the Sec translocase complex, as well as at least some lipoproteins. Aids folding of multispanning membrane proteins. The protein is Membrane protein insertase YidC of Borreliella burgdorferi (strain ZS7) (Borrelia burgdorferi).